Consider the following 533-residue polypeptide: 2,3-bisphosphoglycerate-independent phosphoglycerate mutase (533 aa).

The Mn(2+) site is built by aspartate 15 and serine 65. The active-site Phosphoserine intermediate is the serine 65. Residues histidine 126, 156–157 (RD), arginine 188, arginine 194, 258–261 (RPDR), and lysine 331 contribute to the substrate site. Mn(2+)-binding residues include aspartate 398, histidine 402, aspartate 439, histidine 440, and histidine 457.

It belongs to the BPG-independent phosphoglycerate mutase family. As to quaternary structure, monomer. It depends on Mn(2+) as a cofactor.

It catalyses the reaction (2R)-2-phosphoglycerate = (2R)-3-phosphoglycerate. Its pathway is carbohydrate degradation; glycolysis; pyruvate from D-glyceraldehyde 3-phosphate: step 3/5. In terms of biological role, catalyzes the interconversion of 2-phosphoglycerate and 3-phosphoglycerate. In Trichormus variabilis (strain ATCC 29413 / PCC 7937) (Anabaena variabilis), this protein is 2,3-bisphosphoglycerate-independent phosphoglycerate mutase.